Consider the following 524-residue polypeptide: BEL1-like homeodomain protein 3 (524 aa).

The tract at residues 171–187 (SRYLKPTQQLLDEVVSV) is SR/KY domain. Basic and acidic residues-rich tracts occupy residues 195–205 (NKKMKNDKGQD) and 216–235 (EDDK…ELQS). The interval 195 to 236 (NKKMKNDKGQDFHNGSSDNITEDDKSQSQELSPSERQELQSK) is disordered. Residues 229-300 (ERQELQSKKS…CLRDAIKEQI (72 aa)) are BELL domain. A DNA-binding region (homeobox) is located at residues 346-408 (AWRPQRGLPE…NARVRLWKPM (63 aa)). The interval 429 to 463 (QDTKKMQETSQLKHEDSSSSQQQNQGNNNNNIPYT) is disordered. Over residues 430–445 (DTKKMQETSQLKHEDS) the composition is skewed to basic and acidic residues. Positions 446 to 459 (SSSQQQNQGNNNNN) are enriched in low complexity.

This sequence belongs to the TALE/BELL homeobox family. May form heterodimeric complex with the TALE/KNOX protein STM. Interacts with OFP1, OFP2, OFP3, OFP4, OFP5 and OFP15.

It localises to the nucleus. Its function is as follows. Transcription factor that is responsive of the nuclear import of SHOOT MERISTEMLESS (STM). The chain is BEL1-like homeodomain protein 3 (BLH3) from Arabidopsis thaliana (Mouse-ear cress).